The primary structure comprises 697 residues: MTELSKYRNIGIFAHVDAGKTTTTERILKLTGKIHKLGEVHDGESTTDFMVQEAERGITIQSAAVSCFWKDHRFNVIDTPGHVDFTVEVYRSLKVLDGGIAVFCGSGGVEPQSETNWRYANESEVARIIFVNKLDRMGADFLRVVKQTKDVLAANPLVMVLPIGIEDEFKGVVDLLTRKAYVWDDSGIPENFEVQDVPADMVDLVEEYREMLIESAVEQDDDLMEAYMEGEEPSIEDLKRCIRKGTRTMAFFPTFCGSAFKNKGMQLVLDAVVDYLPAPDEVDPQPLTDEEGNETGEYAIVSADESLKALAFKIMDDRFGALTFVRIYAGRLKKGDTILNSATGKTERIGRMCEMYANDRIEIESAEAGDIIAIVGMKNVQTGHTLCDVKHPCTLEAMVFPEPVISIAVAPKDKGGSEKMAIAIGKMIAEDPSFRVETDEDSGETILKGMGELHLDIKVDILKRTYGVELIVGEPQVAYRETITQMVEDQYTHKKQSGGSGQFGKIEYIIRPGEPNSGFVFKSSVVGGNVPKEYWPAVEKGFASMMNTGTIAGFPVLDVEFELTDGAYHAVDSSAIAFEIAAKAAFRQSIAKAKPQLLEPIMKVDVFSPEDNVGDVIGDLNRRRGMIKDQVAGVTGVRVKADVPLSEMFGYIGTLRTMTSGRGQFSMEFSHYSPCPNSVADKVVEQVKERKAAEAKK.

The 276-residue stretch at S5 to D280 folds into the tr-type G domain. GTP contacts are provided by residues A14 to T21, D78 to H82, and N132 to D135.

It belongs to the TRAFAC class translation factor GTPase superfamily. Classic translation factor GTPase family. EF-G/EF-2 subfamily.

It is found in the cytoplasm. Its function is as follows. Catalyzes the GTP-dependent ribosomal translocation step during translation elongation. During this step, the ribosome changes from the pre-translocational (PRE) to the post-translocational (POST) state as the newly formed A-site-bound peptidyl-tRNA and P-site-bound deacylated tRNA move to the P and E sites, respectively. Catalyzes the coordinated movement of the two tRNA molecules, the mRNA and conformational changes in the ribosome. This is Elongation factor G 2 from Shewanella sp. (strain MR-7).